The chain runs to 658 residues: Threonine--tRNA ligase (658 aa).

Positions methionine 1–threonine 64 constitute a TGS domain. A catalytic region spans residues aspartate 246–proline 549. The Zn(2+) site is built by cysteine 343, histidine 394, and histidine 526.

It belongs to the class-II aminoacyl-tRNA synthetase family. As to quaternary structure, homodimer. Requires Zn(2+) as cofactor.

The protein localises to the cytoplasm. The enzyme catalyses tRNA(Thr) + L-threonine + ATP = L-threonyl-tRNA(Thr) + AMP + diphosphate + H(+). Catalyzes the attachment of threonine to tRNA(Thr) in a two-step reaction: L-threonine is first activated by ATP to form Thr-AMP and then transferred to the acceptor end of tRNA(Thr). Also edits incorrectly charged L-seryl-tRNA(Thr). This chain is Threonine--tRNA ligase, found in Mesorhizobium japonicum (strain LMG 29417 / CECT 9101 / MAFF 303099) (Mesorhizobium loti (strain MAFF 303099)).